The chain runs to 700 residues: Beta-galactosidase Bga (700 aa).

Position 103 (R103) interacts with substrate. C107 serves as a coordination point for Zn(2+). N141 lines the substrate pocket. E142 serves as the catalytic Proton donor. The Zn(2+) site is built by C151, C153, and C156. E312 serves as the catalytic Nucleophile. Residues W320 and 360-363 (EQYH) contribute to the substrate site. Residues 648 to 658 (DPESLAVDDTD) show a composition bias toward acidic residues. Residues 648 to 674 (DPESLAVDDTDRDGFDPMADDDKDSSA) form a disordered region.

Belongs to the glycosyl hydrolase 42 family.

The enzyme catalyses Hydrolysis of terminal non-reducing beta-D-galactose residues in beta-D-galactosides.. Its activity is regulated as follows. Requires 4 M NaCl or KCl for maximal activity. Cleaves o-nitrophenyl-beta-D-galactopyranoside (ONPG) in vitro. The protein is Beta-galactosidase Bga of Halorubrum lacusprofundi (strain ATCC 49239 / DSM 5036 / JCM 8891 / ACAM 34).